The following is a 931-amino-acid chain: Isoleucine--tRNA ligase (931 aa).

Positions 57-67 match the 'HIGH' region motif; sequence PFANGNIHMGH. E556 contacts L-isoleucyl-5'-AMP. The short motif at 597–601 is the 'KMSKS' region element; it reads KMSKS. K600 serves as a coordination point for ATP. Positions 890, 893, 910, and 913 each coordinate Zn(2+).

Belongs to the class-I aminoacyl-tRNA synthetase family. IleS type 1 subfamily. Monomer. Zn(2+) serves as cofactor.

The protein localises to the cytoplasm. The enzyme catalyses tRNA(Ile) + L-isoleucine + ATP = L-isoleucyl-tRNA(Ile) + AMP + diphosphate. Functionally, catalyzes the attachment of isoleucine to tRNA(Ile). As IleRS can inadvertently accommodate and process structurally similar amino acids such as valine, to avoid such errors it has two additional distinct tRNA(Ile)-dependent editing activities. One activity is designated as 'pretransfer' editing and involves the hydrolysis of activated Val-AMP. The other activity is designated 'posttransfer' editing and involves deacylation of mischarged Val-tRNA(Ile). The sequence is that of Isoleucine--tRNA ligase from Lactobacillus delbrueckii subsp. bulgaricus (strain ATCC BAA-365 / Lb-18).